Consider the following 81-residue polypeptide: Serine/arginine-rich splicing factor 6 (81 aa).

Positions 1-48 (RSRSRSRRSSRSRSRSISKSRSRSRSRSKGRSRSRSKGRKSRSKSKSK) are enriched in basic residues. The interval 1 to 81 (RSRSRSRRSS…SRSRSRSRSP (81 aa)) is disordered. A compositionally biased stretch (basic and acidic residues) spans 62 to 71 (RSKDEYEKSR). The segment covering 72–81 (SRSRSRSRSP) has biased composition (basic residues).

The protein belongs to the splicing factor SR family. As to quaternary structure, binds SREK1/SFRS12. Interacts with DYRK1A. Extensively phosphorylated on serine residues in the RS domain. Phosphorylated by DYRK1A, probably in the RS domain. Phosphorylation by DYRK1A modulates alternative splice site selection and inhibits the expression of MAPT/Tau exon 10.

It is found in the nucleus. It localises to the nucleus speckle. Its function is as follows. Plays a role in constitutive splicing and modulates the selection of alternative splice sites. Plays a role in the alternative splicing of MAPT/Tau exon 10. Binds to alternative exons of TNC pre-mRNA and promotes the expression of alternatively spliced TNC. Plays a role in wound healing and in the regulation of keratinocyte differentiation and proliferation via its role in alternative splicing. This is Serine/arginine-rich splicing factor 6 (SRSF6) from Oryctolagus cuniculus (Rabbit).